The following is a 401-amino-acid chain: Phosphoglycerate kinase (401 aa).

Substrate is bound by residues 24-26 (DFN), Arg-40, 63-66 (HFGR), Arg-122, and Arg-155. ATP-binding positions include Lys-206, Gly-297, Glu-328, and 357 to 360 (GGDS).

It belongs to the phosphoglycerate kinase family. As to quaternary structure, monomer.

The protein localises to the cytoplasm. The enzyme catalyses (2R)-3-phosphoglycerate + ATP = (2R)-3-phospho-glyceroyl phosphate + ADP. It functions in the pathway carbohydrate degradation; glycolysis; pyruvate from D-glyceraldehyde 3-phosphate: step 2/5. The protein is Phosphoglycerate kinase of Gloeothece citriformis (strain PCC 7424) (Cyanothece sp. (strain PCC 7424)).